The primary structure comprises 269 residues: 3-methyl-2-oxobutanoate hydroxymethyltransferase (269 aa).

Residues D43 and D82 each coordinate Mg(2+). 3-methyl-2-oxobutanoate contacts are provided by residues 43–44, D82, and K110; that span reads DS. E112 contacts Mg(2+). The active-site Proton acceptor is the E179.

This sequence belongs to the PanB family. As to quaternary structure, homodecamer; pentamer of dimers. It depends on Mg(2+) as a cofactor.

Its subcellular location is the cytoplasm. The enzyme catalyses 3-methyl-2-oxobutanoate + (6R)-5,10-methylene-5,6,7,8-tetrahydrofolate + H2O = 2-dehydropantoate + (6S)-5,6,7,8-tetrahydrofolate. It participates in cofactor biosynthesis; (R)-pantothenate biosynthesis; (R)-pantoate from 3-methyl-2-oxobutanoate: step 1/2. Its function is as follows. Catalyzes the reversible reaction in which hydroxymethyl group from 5,10-methylenetetrahydrofolate is transferred onto alpha-ketoisovalerate to form ketopantoate. The protein is 3-methyl-2-oxobutanoate hydroxymethyltransferase of Acinetobacter baylyi (strain ATCC 33305 / BD413 / ADP1).